Consider the following 338-residue polypeptide: GTPase Obg (338 aa).

One can recognise an Obg domain in the interval Met1–Met159. An OBG-type G domain is found at Ala160–Trp331. Residues Gly166–Ser173, Phe191–Lys195, Asp213–Gly216, Asn283–Asp286, and Ser312–Ala314 each bind GTP. 2 residues coordinate Mg(2+): Ser173 and Thr193.

This sequence belongs to the TRAFAC class OBG-HflX-like GTPase superfamily. OBG GTPase family. In terms of assembly, monomer. The cofactor is Mg(2+).

The protein resides in the cytoplasm. An essential GTPase which binds GTP, GDP and possibly (p)ppGpp with moderate affinity, with high nucleotide exchange rates and a fairly low GTP hydrolysis rate. Plays a role in control of the cell cycle, stress response, ribosome biogenesis and in those bacteria that undergo differentiation, in morphogenesis control. This is GTPase Obg from Geotalea uraniireducens (strain Rf4) (Geobacter uraniireducens).